Consider the following 406-residue polypeptide: Transforming growth factor beta regulator 1 (406 aa).

2 disordered regions span residues Met-1 to Ser-28 and Ser-109 to Lys-144. Residue Ser-2 is modified to N-acetylserine. The residue at position 13 (Thr-13) is a Phosphothreonine. Residues Glu-134 to Lys-144 show a composition bias toward basic and acidic residues. One can recognise an FYR N-terminal domain in the interval Val-177 to Gly-236. Positions Gly-237–Lys-316 constitute an FYR C-terminal domain.

This sequence belongs to the TBRG1 family. In terms of assembly, interacts with CDKN2A and MDM2. Post-translationally, ubiquitinated; mediated by MDM2 and leading to its subsequent proteasomal degradation.

It is found in the nucleus. Its function is as follows. Acts as a growth inhibitor. Can activate p53/TP53, causes G1 arrest and collaborates with CDKN2A to restrict proliferation, but does not require either protein to inhibit DNA synthesis. Redistributes CDKN2A into the nucleoplasm. Involved in maintaining chromosomal stability. The protein is Transforming growth factor beta regulator 1 (Tbrg1) of Mus musculus (Mouse).